Here is a 290-residue protein sequence, read N- to C-terminus: Signal peptidase I (290 aa).

Topologically, residues 1-13 are cytoplasmic; that stretch reads MKFLRSVYAFCSS. The helical transmembrane segment at 14–34 threads the bilayer; the sequence is WVGTIIIVLLVIFFIAQAFII. Over 35-290 the chain is Extracellular; the sequence is PSRSMVGTLY…KIIKKEKATH (256 aa). Active-site residues include S38 and K106.

Belongs to the peptidase S26 family.

Its subcellular location is the cell membrane. The catalysed reaction is Cleavage of hydrophobic, N-terminal signal or leader sequences from secreted and periplasmic proteins.. In Helicobacter pylori (strain J99 / ATCC 700824) (Campylobacter pylori J99), this protein is Signal peptidase I (lepB).